The sequence spans 323 residues: Syntaxin-42 (323 aa).

Over 1-302 the chain is Cytoplasmic; the sequence is MATRNRTTVY…QREGAMVKCA (302 aa). In terms of domain architecture, t-SNARE coiled-coil homology spans 227 to 289; it reads QHVSAERERE…EEGYKQLQKA (63 aa). Residues 303-323 form a helical; Anchor for type IV membrane protein membrane-spanning segment; the sequence is TILLVLCLIMIVLLILKNILF.

The protein belongs to the syntaxin family. In terms of assembly, interacts with VTI12 and SYP61 to form a t-SNARE complex and with VPS45. In terms of tissue distribution, expressed at low levels in roots, stems, flowers and leaves.

It localises to the golgi apparatus. The protein resides in the trans-Golgi network membrane. In terms of biological role, contributes to the regulation of secretory and vacuolar transport pathways in the post-Golgi network, and to the maintenance of the Golgi apparatus and trans-Golgi network (TGN) morphologies. Vesicle trafficking protein that functions in the secretory pathway and mediates liposome fusion. Required for extracellular resistance responses to a fungal pathogen. Also involved in the protection of chloroplasts from salicylic acid-dependent biotic stress. The sequence is that of Syntaxin-42 from Arabidopsis thaliana (Mouse-ear cress).